A 149-amino-acid polypeptide reads, in one-letter code: Macrodomain Ter protein (149 aa).

It belongs to the MatP family. As to quaternary structure, homodimer.

Its subcellular location is the cytoplasm. In terms of biological role, required for spatial organization of the terminus region of the chromosome (Ter macrodomain) during the cell cycle. Prevents early segregation of duplicated Ter macrodomains during cell division. Binds specifically to matS, which is a 13 bp signature motif repeated within the Ter macrodomain. In Vibrio campbellii (strain ATCC BAA-1116), this protein is Macrodomain Ter protein.